A 97-amino-acid polypeptide reads, in one-letter code: Aspartyl/glutamyl-tRNA(Asn/Gln) amidotransferase subunit C (97 aa).

This sequence belongs to the GatC family. Heterotrimer of A, B and C subunits.

The catalysed reaction is L-glutamyl-tRNA(Gln) + L-glutamine + ATP + H2O = L-glutaminyl-tRNA(Gln) + L-glutamate + ADP + phosphate + H(+). The enzyme catalyses L-aspartyl-tRNA(Asn) + L-glutamine + ATP + H2O = L-asparaginyl-tRNA(Asn) + L-glutamate + ADP + phosphate + 2 H(+). Functionally, allows the formation of correctly charged Asn-tRNA(Asn) or Gln-tRNA(Gln) through the transamidation of misacylated Asp-tRNA(Asn) or Glu-tRNA(Gln) in organisms which lack either or both of asparaginyl-tRNA or glutaminyl-tRNA synthetases. The reaction takes place in the presence of glutamine and ATP through an activated phospho-Asp-tRNA(Asn) or phospho-Glu-tRNA(Gln). The protein is Aspartyl/glutamyl-tRNA(Asn/Gln) amidotransferase subunit C of Prochlorococcus marinus (strain MIT 9215).